The primary structure comprises 506 residues: SPbeta prophage-derived uncharacterized protein YonE (506 aa).

The tract at residues 473–506 (YTFTGNEVGRPNEGNKNNDNTVKSATSNGNDNPI) is disordered. The span at 486–506 (GNKNNDNTVKSATSNGNDNPI) shows a compositional bias: polar residues.

In Bacillus subtilis (strain 168), this protein is SPbeta prophage-derived uncharacterized protein YonE (yonE).